The following is a 464-amino-acid chain: MLTNTKPDEKIFQKNSTTGSYWITTFGCQMNKADSERMAGTLEKMGYTRADNELNADLVLYNTCTIRDNAEQKVYSFLGRQAKRKHKTPSLKLVVAGCLAQQEGESLLRRVPELDLVMGPQHVNNLENLLGKVDLGNQVAATEENFISEDITSARRESSICGWVNIIYGCNERCSYCVVPSVRGKEQSRYPNAIKSEIQKLAGDNFKEITLLGQNIDAYGRDLPGTTKEGRKENTLTDLLYYIHDVKGIRRIRFATSHPRYFSKRLIQACYELDKVCEHFHIPFQSGNDEILKQMSRGYTIKKYKNIIENIRSLMPDASITADAIVAFPGETEKQYQDTLKLITEIGFDQVNTAAYSPRPNTPAAVWSNQLSEEVKKARLQEINDLVEKTARSRNKRYINNIESVLIEGLNPKNSSQIMGRTRTNRLTFVEIPKNIDFNFSLGDEIDVRINETRPFSLTGELYL.

One can recognise an MTTase N-terminal domain in the interval 19 to 135 (GSYWITTFGC…LENLLGKVDL (117 aa)). Positions 28, 64, 98, 170, 174, and 177 each coordinate [4Fe-4S] cluster. Residues 156-394 (RESSICGWVN…DLVEKTARSR (239 aa)) form the Radical SAM core domain. The 69-residue stretch at 396-464 (KRYINNIESV…PFSLTGELYL (69 aa)) folds into the TRAM domain.

It belongs to the methylthiotransferase family. MiaB subfamily. As to quaternary structure, monomer. Requires [4Fe-4S] cluster as cofactor.

Its subcellular location is the cytoplasm. The enzyme catalyses N(6)-dimethylallyladenosine(37) in tRNA + (sulfur carrier)-SH + AH2 + 2 S-adenosyl-L-methionine = 2-methylsulfanyl-N(6)-dimethylallyladenosine(37) in tRNA + (sulfur carrier)-H + 5'-deoxyadenosine + L-methionine + A + S-adenosyl-L-homocysteine + 2 H(+). Catalyzes the methylthiolation of N6-(dimethylallyl)adenosine (i(6)A), leading to the formation of 2-methylthio-N6-(dimethylallyl)adenosine (ms(2)i(6)A) at position 37 in tRNAs that read codons beginning with uridine. In Prochlorococcus marinus (strain AS9601), this protein is tRNA-2-methylthio-N(6)-dimethylallyladenosine synthase.